The primary structure comprises 274 residues: Large ribosomal subunit protein uL2c (274 aa).

2 disordered regions span residues 1–22 and 225–274; these read MAIHLYKTSTPSTRNGAVDNQV and PVDH…RRSK.

The protein belongs to the universal ribosomal protein uL2 family. As to quaternary structure, part of the 50S ribosomal subunit.

The protein localises to the plastid. The protein resides in the chloroplast. The protein is Large ribosomal subunit protein uL2c (rpl2) of Silene latifolia (White campion).